Consider the following 593-residue polypeptide: Regulatory protein NPR1 (593 aa).

A phosphoserine mark is found at S11, S15, S55, and S59. The BTB domain maps to 65 to 144; sequence SDAKLVLSDG…VYSSRVRPPP (80 aa). The C2HC NPR-type zinc finger occupies 147–161; it reads VSECADENCCHVACR. Zn(2+)-binding residues include C150 and C155. Position 156 is an S-nitrosocysteine (C156). Residues H157 and C160 each coordinate Zn(2+). ANK repeat units lie at residues 229-258, 265-295, 297-324, 328-357, and 361-397; these read KSNV…ELGL, KHVS…NLDD, CALH…DVNH, RGYT…SASE, and EGRT…CVEI. Residues 345 to 348 carry the SIM3, required fo binding to SUMO3 and subsequent sumoylation motif; it reads ILSL. The tract at residues 387-525 is salicylic acid-binding core (SBC); the sequence is HSLKGRLCVE…DQIMNCEDLT (139 aa). R432 contacts salicylate. Residues 537-554 carry the Nuclear localization signal motif; sequence KRLQKKQRYMEIQETLKK. Residues 563-593 form a disordered region; the sequence is LGNSSLTDSTSSTSKSTGGKRSNRKLSHRRR. The span at 566–579 shows a compositional bias: low complexity; the sequence is SSLTDSTSSTSKST. A compositionally biased stretch (basic residues) spans 583-593; the sequence is RSNRKLSHRRR.

This sequence belongs to the plant 'ANKYRIN-BTB/POZ' family. 'NPR1-like' subfamily. Homodimer. Oligomer of dimers in an uninduced quiescent state; disulfide-linked. Forms activated (i.e. sumoylated) homodimers and monomers upon systemic acquired resistance (SAR) induction. Interacts with TGA1, TGA3, TGA4, TGA5, TGA6, TGA7 and with reduced forms of TGA1 and TGA4. Activated homodimer binds two TGA3 dimers in the presence of DNA via its ANK 2 repeat (265-295), thus forming a TGA3(2)-NPR1(2)-TGA3(2) complex in which NPR1 serves as a transcription cofactor by bridging two transcription factor complexes in an enhanceosome. Interacts with NIMIN-1 and NIMIN-3 via its C-terminal region, and with NIMIN-2 via its N-terminal region. Interacts with SUMO3 but not with SUMO1 and SUMO2; this interaction is required for phosphorylation at Ser-11 and Ser-15, and triggers activation by sumoylation and subsequent degradation. Binds to NPR3 and NPR4; these interactions are promoted by association of salicylic acid (SA) with NPR3, but disrupted by SA association with NPR4, probably due to conformational changes. Binds to CUL3A, a core component of the cullin-RING ubiquitin ligases (CRL); this interaction requires NPR3 and NPR4. Interacts with NPR2 independently of SA. Binds to WRKY70 when unmodified (i.e. not sumoylated). Phosphorylation at Ser-55 and Ser-59 prevents sumoylation to ensure stability and quiescence. Post-translationally, phosphorylated at Ser-11 and Ser-15 in the nucleus; facilitates its recruitment to a cullin3-based ubiquitin ligase leading to polyubiquitination and subsequent CUL3/CSN-mediated degradation. This phosphorylation at Ser-11 and Ser-15 requires interaction with SUMO3, and promotes in turn activation by sumoylation and subsequent degradation. In terms of processing, ubiquitinated. Sumoylated by SUMO3 independently of an E3 ligase to activate defense gene expression by switching from association with WRKY transcriptional repressors (e.g. WRKY70) to TGA transcriptional activators (e.g. TGA3). Sumoylation is inhibited by phosphorylation at Ser-55 and Ser-59, but seems to promote phosphorylation at Ser-11 and Ser-15. Sumoylation also triggers degradation, making immune induction transient. Post-translationally, the Cys-82-SH group reacts with Cys-216-SH of the other subunit to form an intermolecular disulfide. This disulfide might subsequently be reduced upon systemic acquired resistance (SAR) induction. In terms of processing, S-nitrosylation at Cys-156 facilitates its oligomerization.

The protein localises to the cytoplasm. Its subcellular location is the nucleus. It is found in the nuclear body. It functions in the pathway protein modification; protein ubiquitination. Salicylic acid (SA)-binding substrate-specific adapter of an E3 ubiquitin-protein ligase complex (CUL3-RBX1-BTB) which mediates the ubiquitination and subsequent proteasomal degradation of target proteins. Transcription cofactor that represses gene expression in the absence of salicylic acid (SA), when attached to negative cis-elements (W-box) with WRKY transcription factors (e.g. WRKY70), but stimulates gene expression upon activation by SA, when sumoylated and attached to positive cis-elements (as-1) with TGA transcription factors (e.g. TGA3), thus confering immunity through a series of gene regulations ending in a significant increase in antimicrobial and defense genes expression (e.g. PR-1 and PR-2). Binds to SA with low capacity; this leads to conformational changes. Key positive regulator of the SA-dependent signaling pathway that negatively regulates jasmonic acid (JA)-dependent signaling pathway. Controls the onset of systemic acquired resistance (SAR). Upon SAR induction, a biphasic change in cellular reduction potential occurs, resulting in reduction of the cytoplasmic oligomeric form to dimeric and monomeric forms, which accumulate in the nucleus and activate gene expression. Appears to control lesion expansion by acting as an inhibitor of programmed cell death (PCD) during effector-triggered immunity (ETI) that occurs in response to incompatible interaction with avirulent pathogenic bacteria (i.e. Pseudomonas syringae ES4326/avrRpt2) ending in a hypersensitive response (HR). Phosphorylated form is target of proteasome degradation. The polypeptide is Regulatory protein NPR1 (Arabidopsis thaliana (Mouse-ear cress)).